Consider the following 411-residue polypeptide: Argininosuccinate synthase (411 aa).

ATP contacts are provided by residues 10–18 and Ala37; that span reads AYSGGLDTS. Tyr89 and Ser94 together coordinate L-citrulline. Position 119 (Gly119) interacts with ATP. Thr121, Asn125, and Asp126 together coordinate L-aspartate. Asn125 contributes to the L-citrulline binding site. The L-citrulline site is built by Arg129, Ser178, Ser187, Glu263, and Tyr275.

This sequence belongs to the argininosuccinate synthase family. Type 1 subfamily. As to quaternary structure, homotetramer.

Its subcellular location is the cytoplasm. The catalysed reaction is L-citrulline + L-aspartate + ATP = 2-(N(omega)-L-arginino)succinate + AMP + diphosphate + H(+). It participates in amino-acid biosynthesis; L-arginine biosynthesis; L-arginine from L-ornithine and carbamoyl phosphate: step 2/3. This is Argininosuccinate synthase from Aeromonas hydrophila subsp. hydrophila (strain ATCC 7966 / DSM 30187 / BCRC 13018 / CCUG 14551 / JCM 1027 / KCTC 2358 / NCIMB 9240 / NCTC 8049).